The chain runs to 145 residues: 3-dehydroquinate dehydratase (145 aa).

The active-site Proton acceptor is tyrosine 23. 3 residues coordinate substrate: asparagine 74, histidine 80, and aspartate 87. Histidine 100 (proton donor) is an active-site residue. Residues 101–102 and arginine 111 contribute to the substrate site; that span reads IS.

The protein belongs to the type-II 3-dehydroquinase family. Homododecamer.

The catalysed reaction is 3-dehydroquinate = 3-dehydroshikimate + H2O. It participates in metabolic intermediate biosynthesis; chorismate biosynthesis; chorismate from D-erythrose 4-phosphate and phosphoenolpyruvate: step 3/7. Its function is as follows. Catalyzes a trans-dehydration via an enolate intermediate. In Mycobacterium leprae (strain Br4923), this protein is 3-dehydroquinate dehydratase.